A 403-amino-acid polypeptide reads, in one-letter code: Prostaglandin D2 receptor 2 (403 aa).

At 1–34 the chain is on the extracellular side; it reads MANITLKPLCPLLEEMVQLPNHSNSSLRYIDHVS. N-linked (GlcNAc...) asparagine glycans are attached at residues N3, N21, and N24. Residues 35–55 form a helical membrane-spanning segment; sequence VLLHGLASLLGLVENGLILFV. Residues 56–71 lie on the Cytoplasmic side of the membrane; that stretch reads VGCRMRQTVVTTWVLH. A helical transmembrane segment spans residues 72–92; sequence LALSDLLAAASLPFFTYFLAV. At 93-104 the chain is on the extracellular side; the sequence is GHSWELGTTFCK. A disulfide bridge connects residues C103 and C198. The chain crosses the membrane as a helical span at residues 105–125; it reads LHSSVFFLNMFASGFLLSAIS. Over 126–147 the chain is Cytoplasmic; that stretch reads LDRCLQVVRPVWAQNHRTVAAA. A helical membrane pass occupies residues 148–168; sequence HRVCLMLWALAVLNTVPYFVF. The Extracellular segment spans residues 169 to 209; that stretch reads RDTIPRRDGRIMCYYNMLLLNPGSDRDTTCDYRQKALAVSK. The chain crosses the membrane as a helical span at residues 210–230; that stretch reads FLLAFMVPLAIIASSHVAVSL. Residues 231-245 are Cytoplasmic-facing; the sequence is QLHHRGRQRTGRFVR. The helical transmembrane segment at 246–266 threads the bilayer; that stretch reads LVAAIVVAFILCWGPYHIFSL. At 267–284 the chain is on the extracellular side; that stretch reads LEARAHSVTTLRQLASRG. A helical transmembrane segment spans residues 285 to 305; the sequence is LPFVTSLAFFNSVVNPLLYVL. Over 306–403 the chain is Cytoplasmic; sequence TCPDMLHKLR…KQGSLSCTLD (98 aa). Residues 329–332 carry the Involved in the recycling of CRTH2 motif; the sequence is DSDL. The residue at position 330 (S330) is a Phosphoserine. Disordered stretches follow at residues 332–353 and 384–403; these read LSTG…STTT and PRRV…CTLD. Residues 338 to 348 are compositionally biased toward basic residues; sequence KRCRRRHRRRA. S349 carries the phosphoserine modification. A compositionally biased stretch (polar residues) spans 393 to 403; it reads EKQGSLSCTLD.

It belongs to the G-protein coupled receptor 1 family. Phosphorylated.

The protein localises to the cell membrane. Its function is as follows. Receptor for prostaglandin D2 (PGD2). Coupled to the G(i)-protein. Receptor activation may result in pertussis toxin-sensitive decreases in cAMP levels and Ca(2+) mobilization. PI3K signaling is also implicated in mediating PTGDR2 effects. PGD2 induced receptor internalization. CRTH2 internalization can be regulated by diverse kinases such as, PKC, PKA, GRK2, GPRK5/GRK5 and GRK6. Receptor activation is responsible, at least in part, in immune regulation and allergic/inflammation responses. The sequence is that of Prostaglandin D2 receptor 2 (Ptgdr2) from Rattus norvegicus (Rat).